Here is a 282-residue protein sequence, read N- to C-terminus: D-alanine aminotransferase (282 aa).

Tyr-32 serves as a coordination point for substrate. Arg-51 is a binding site for pyridoxal 5'-phosphate. Substrate is bound by residues Arg-99 and His-101. The active-site Proton acceptor is Lys-146. At Lys-146 the chain carries N6-(pyridoxal phosphate)lysine. Glu-178 contacts pyridoxal 5'-phosphate.

The protein belongs to the class-IV pyridoxal-phosphate-dependent aminotransferase family. As to quaternary structure, homodimer. Pyridoxal 5'-phosphate serves as cofactor.

It catalyses the reaction D-alanine + 2-oxoglutarate = D-glutamate + pyruvate. Its function is as follows. Acts on the D-isomers of alanine, leucine, aspartate, glutamate, aminobutyrate, norvaline and asparagine. The enzyme transfers an amino group from a substrate D-amino acid to the pyridoxal phosphate cofactor to form pyridoxamine and an alpha-keto acid in the first half-reaction. The second half-reaction is the reverse of the first, transferring the amino group from the pyridoxamine to a second alpha-keto acid to form the product D-amino acid via a ping-pong mechanism. This is an important process in the formation of D-alanine and D-glutamate, which are essential bacterial cell wall components. This Staphylococcus epidermidis (strain ATCC 35984 / DSM 28319 / BCRC 17069 / CCUG 31568 / BM 3577 / RP62A) protein is D-alanine aminotransferase (dat).